Consider the following 1388-residue polypeptide: Rho-associated protein kinase 2 (1388 aa).

Residues 1–26 (MSRPPPTGKMPGAPEAAPGDGAGAGR) form a disordered region. The Protein kinase domain maps to 92 to 354 (YDVVKVIGRG…VEEIKQHPFF (263 aa)). ATP is bound by residues 98–106 (IGRGAFGEV) and lysine 121. Aspartate 214 serves as the catalytic Proton acceptor. An AGC-kinase C-terminal domain is found at 357-425 (DQWNWDNIRE…FRENLLLSDS (69 aa)). Positions 363-784 (NIRETAAPVV…LNELLKQKDV (422 aa)) are interaction with PPP1R12A. The tract at residues 373–420 (PELSSDIDSSNFDDIEDDKGDVETFPIPKAFVGNQLPFIGFTYFRENL) is interaction with NPM1. Position 414 is a phosphothreonine; by ROCK2 (threonine 414). Residues 439–1131 (SEESQEIQKK…QLQALHIGMD (693 aa)) adopt a coiled-coil conformation. Positions 497 to 573 (TLRQLEREKA…LDEANALLRT (77 aa)) constitute an REM-1 domain. Over residues 512 to 530 (NAEYQRKADHEADKKRNLE) the composition is skewed to basic and acidic residues. The segment at 512-532 (NAEYQRKADHEADKKRNLEND) is disordered. The residue at position 722 (tyrosine 722) is a Phosphotyrosine; by SRC. The RhoBD domain maps to 979–1047 (TSDVANLANE…LAEIMNRKEP (69 aa)). An RHOA binding region spans residues 979–1047 (TSDVANLANE…LAEIMNRKEP (69 aa)). Position 1137 is a phosphoserine (serine 1137). Residues 1150–1349 (ESRLEGWLSL…WVSRLVKKIP (200 aa)) enclose the PH domain. Threonine 1212 is modified (phosphothreonine). The Phorbol-ester/DAG-type zinc-finger motif lies at 1260–1315 (GHEFIPTLYHFPTNCEACMKPLWHMFKPPPALECRRCHIKCHKDHMDKKEEIIAPC). Residues 1345–1388 (VKKIPKKPPAPDPFARSSPRTSMKIQQNQSIRRPSRQLAPNKPS) form a disordered region. Phosphoserine occurs at positions 1362 and 1374. Residues 1362–1376 (SPRTSMKIQQNQSIR) are compositionally biased toward polar residues.

Belongs to the protein kinase superfamily. AGC Ser/Thr protein kinase family. As to quaternary structure, homodimer. Interacts with IRS1. Interacts with RAF1. Interacts with RHOA (activated by GTP), RHOB and RHOC. Interacts with PPP1R12A. Interacts with EP300. Interacts with CHORDC1. Interacts with BRCA2. Interacts with NPM1; this interaction enhances ROCK2 activity. Interacts with SORL1. Interacts with PJVK. The cofactor is Mg(2+). Autophosphorylated. Phosphorylation at Tyr-722 reduces its binding to RHOA and is crucial for focal adhesion dynamics. Dephosphorylation by PTPN11 stimulates its RHOA binding activity. Post-translationally, cleaved by granzyme B during apoptosis. This leads to constitutive activation of the kinase and membrane blebbing. Highly expressed in brain, heart, lung, liver, stomach, spleen, kidney, testis, muscle, embryo and placenta. Isoform 2 is expressed predominantly in the skeletal muscle.

It localises to the cytoplasm. It is found in the cell membrane. Its subcellular location is the nucleus. The protein resides in the cytoskeleton. The protein localises to the microtubule organizing center. It localises to the centrosome. It catalyses the reaction L-seryl-[protein] + ATP = O-phospho-L-seryl-[protein] + ADP + H(+). The enzyme catalyses L-threonyl-[protein] + ATP = O-phospho-L-threonyl-[protein] + ADP + H(+). Its activity is regulated as follows. Activated by RHOA binding. Inhibited by Y-27632. Its function is as follows. Protein kinase which is a key regulator of actin cytoskeleton and cell polarity. Involved in regulation of smooth muscle contraction, actin cytoskeleton organization, stress fiber and focal adhesion formation, neurite retraction, cell adhesion and motility via phosphorylation of ADD1, BRCA2, CNN1, EZR, DPYSL2, EP300, MSN, MYL9/MLC2, NPM1, RDX, PPP1R12A and VIM. Phosphorylates SORL1 and IRF4. Acts as a negative regulator of VEGF-induced angiogenic endothelial cell activation. Positively regulates the activation of p42/MAPK1-p44/MAPK3 and of p90RSK/RPS6KA1 during myogenic differentiation. Plays an important role in the timely initiation of centrosome duplication. Inhibits keratinocyte terminal differentiation. May regulate closure of the eyelids and ventral body wall through organization of actomyosin bundles. Plays a critical role in the regulation of spine and synaptic properties in the hippocampus. Plays a role in placental homeostasis during the perinatal period. Plays an important role in generating the circadian rhythm of the aortic myofilament Ca(2+) sensitivity and vascular contractility by modulating the myosin light chain phosphorylation. The polypeptide is Rho-associated protein kinase 2 (Rock2) (Mus musculus (Mouse)).